Here is a 377-residue protein sequence, read N- to C-terminus: UDP-N-acetylglucosamine--N-acetylmuramyl-(pentapeptide) pyrophosphoryl-undecaprenol N-acetylglucosamine transferase (377 aa).

UDP-N-acetyl-alpha-D-glucosamine-binding positions include 29–31 (TAG), Asn-142, Arg-179, Ser-213, and Gln-308.

Belongs to the glycosyltransferase 28 family. MurG subfamily.

It localises to the cell membrane. It carries out the reaction di-trans,octa-cis-undecaprenyl diphospho-N-acetyl-alpha-D-muramoyl-L-alanyl-D-glutamyl-meso-2,6-diaminopimeloyl-D-alanyl-D-alanine + UDP-N-acetyl-alpha-D-glucosamine = di-trans,octa-cis-undecaprenyl diphospho-[N-acetyl-alpha-D-glucosaminyl-(1-&gt;4)]-N-acetyl-alpha-D-muramoyl-L-alanyl-D-glutamyl-meso-2,6-diaminopimeloyl-D-alanyl-D-alanine + UDP + H(+). It functions in the pathway cell wall biogenesis; peptidoglycan biosynthesis. Cell wall formation. Catalyzes the transfer of a GlcNAc subunit on undecaprenyl-pyrophosphoryl-MurNAc-pentapeptide (lipid intermediate I) to form undecaprenyl-pyrophosphoryl-MurNAc-(pentapeptide)GlcNAc (lipid intermediate II). The protein is UDP-N-acetylglucosamine--N-acetylmuramyl-(pentapeptide) pyrophosphoryl-undecaprenol N-acetylglucosamine transferase of Saccharopolyspora erythraea (strain ATCC 11635 / DSM 40517 / JCM 4748 / NBRC 13426 / NCIMB 8594 / NRRL 2338).